The following is a 407-amino-acid chain: MARKDTNKQYSLRKLKTGTASVAVAVAVLGAGFANQTTVKANSKNPVPVKKEAKLSEAELHDKIKNLEEEKAELFEKLDKVEEEHKKVEEEHKKDHEKLEKKSEDVERHYLRQLDQEYKEQQERQKNLEELERQSQREVEKRYQEQLQKQQQLEKEKQISEASRKSLRRDLEASRAAKKDLEAEHQKLKEEKQISEASRKSLRRDLEASRAAKKDLEAEHQKLKEEKQISEASRQGLSRDLEASRAAKKDLEAEHQKLKEEKQISEASRQGLSRDLEASREAKKKVEADLAEANSKLQALEKLNKELEEGKKLSEKEKAELQAKLEAEAKALKEQLAKQAEELAKLKGNQTPNAKVAPQANRSRSAMTQQKRTLPSTGETANPFFTAAAATVMVSAGMLALKRKEEN.

An N-terminal signal peptide occupies residues 1-41 (MARKDTNKQYSLRKLKTGTASVAVAVAVLGAGFANQTTVKA). The segment at 81-94 (VEEEHKKVEEEHKK) is 2 X 7 AA tandem repeats. Basic and acidic residues-rich tracts occupy residues 83 to 144 (EEHK…KRYQ), 152 to 229 (QLEK…EKQI), 237 to 264 (LSRD…EKQI), and 272 to 288 (LSRD…KVEA). The tract at residues 83 to 289 (EEHKKVEEEH…REAKKKVEAD (207 aa)) is disordered. 4 C repeats span residues 151–185 (QQLE…EAEH), 186–220 (QKLK…EAEH), 221–255 (QKLK…EAEH), and 256–290 (QKLK…EADL). 4 D repeats span residues 323 to 328 (AKLEAE), 329 to 334 (AKALKE), 337 to 342 (AKQAEE), and 344 to 349 (AKLKGN). A disordered region spans residues 344 to 382 (AKLKGNQTPNAKVAPQANRSRSAMTQQKRTLPSTGETAN). Residues 360–380 (ANRSRSAMTQQKRTLPSTGET) show a composition bias toward polar residues. The short motif at 374–378 (LPSTG) is the LPXTG sorting signal element. Position 377 is a pentaglycyl murein peptidoglycan amidated threonine (threonine 377). A propeptide spans 378–407 (GETANPFFTAAAATVMVSAGMLALKRKEEN) (removed by sortase).

It belongs to the M protein family.

Its subcellular location is the secreted. It localises to the cell wall. Its function is as follows. This protein is one of the different antigenic serotypes of protein M. Protein M is closely associated with virulence of the bacterium and can render the organism resistant to phagocytosis. The sequence is that of M protein, serotype 2.1 (emmL2.1) from Streptococcus pyogenes.